The sequence spans 232 residues: Zinc-finger homeodomain protein 5 (232 aa).

Positions 1-11 are enriched in acidic residues; that stretch reads MELSEHEEDAG. Positions 1 to 25 are disordered; the sequence is MELSEHEEDAGDVGGGCSSPPTPPH. The segment at 40-86 adopts a ZF-HD dimerization-type; degenerate zinc-finger fold; sequence YHECLRNHAAASGGHVVDGCGEFMPASTEEPLACAACGCHRSFHRRD. Residues 126–170 are disordered; sequence GLPFPGYGTPSGGTGTTTASSSDERLRPSPVQPRRRSRTTFTREQ. The segment at residues 159-222 is a DNA-binding region (homeobox); the sequence is RRRSRTTFTR…NNKHSFKQKQ (64 aa).

Homo- and heterodimer with other ZFHD proteins.

It is found in the nucleus. Functionally, putative transcription factor. The sequence is that of Zinc-finger homeodomain protein 5 (ZHD5) from Oryza sativa subsp. japonica (Rice).